A 366-amino-acid polypeptide reads, in one-letter code: Glutathione S-transferase omega-like 3 (366 aa).

The active site involves C46. The region spanning P197 to V349 is the GST C-terminal domain.

It belongs to the GST superfamily. Omega family.

The protein resides in the cytoplasm. It catalyses the reaction RX + glutathione = an S-substituted glutathione + a halide anion + H(+). Functionally, active as '1-Cys' thiol transferase against beta-hydroxyethyl disulfide (HED), as dehydroascorbate reductase and as dimethylarsinic acid reductase, while not active against the standard GST substrate 1-chloro-2,4-dinitrobenzene (CDNB). This Saccharomyces cerevisiae (strain ATCC 204508 / S288c) (Baker's yeast) protein is Glutathione S-transferase omega-like 3 (GTO3).